The sequence spans 479 residues: Mannose-1-phosphate guanylyltransferase RfbM (479 aa).

This sequence belongs to the mannose-6-phosphate isomerase type 2 family. In terms of assembly, homodimer.

It carries out the reaction alpha-D-mannose 1-phosphate + GTP + H(+) = GDP-alpha-D-mannose + diphosphate. Its pathway is nucleotide-sugar biosynthesis; GDP-alpha-D-mannose biosynthesis; GDP-alpha-D-mannose from alpha-D-mannose 1-phosphate (GTP route): step 1/1. It participates in bacterial outer membrane biogenesis; LPS O-antigen biosynthesis. Its function is as follows. Involved in GDP-mannose biosynthesis which serves as the activated sugar nucleotide precursor for mannose residues in cell surface polysaccharides. This enzyme participates in synthesis of the LPS group B O antigen. The chain is Mannose-1-phosphate guanylyltransferase RfbM (rfbM) from Salmonella typhimurium (strain LT2 / SGSC1412 / ATCC 700720).